Reading from the N-terminus, the 176-residue chain is uncharacterized protein (176 aa).

This sequence belongs to the mimivirus R160 family.

This is an uncharacterized protein from Acanthamoeba polyphaga mimivirus (APMV).